Consider the following 179-residue polypeptide: Adenine phosphoribosyltransferase (179 aa).

Belongs to the purine/pyrimidine phosphoribosyltransferase family. Homodimer.

It is found in the cytoplasm. It carries out the reaction AMP + diphosphate = 5-phospho-alpha-D-ribose 1-diphosphate + adenine. The protein operates within purine metabolism; AMP biosynthesis via salvage pathway; AMP from adenine: step 1/1. In terms of biological role, catalyzes a salvage reaction resulting in the formation of AMP, that is energically less costly than de novo synthesis. The sequence is that of Adenine phosphoribosyltransferase from Histophilus somni (strain 129Pt) (Haemophilus somnus).